Here is a 135-residue protein sequence, read N- to C-terminus: Ribosome-binding factor A (135 aa).

The protein belongs to the RbfA family. Monomer. Binds 30S ribosomal subunits, but not 50S ribosomal subunits or 70S ribosomes.

Its subcellular location is the cytoplasm. In terms of biological role, one of several proteins that assist in the late maturation steps of the functional core of the 30S ribosomal subunit. Associates with free 30S ribosomal subunits (but not with 30S subunits that are part of 70S ribosomes or polysomes). Required for efficient processing of 16S rRNA. May interact with the 5'-terminal helix region of 16S rRNA. The polypeptide is Ribosome-binding factor A (Aliivibrio salmonicida (strain LFI1238) (Vibrio salmonicida (strain LFI1238))).